A 542-amino-acid chain; its full sequence is Bifunctional pantoate ligase/cytidylate kinase (542 aa).

The interval 1–280 (MHWLRTVAAL…VGQTRLIDNL (280 aa)) is pantoate--beta-alanine ligase. 28–35 (MGSLHEGH) is an ATP binding site. Catalysis depends on His35, which acts as the Proton donor. Gln59 lines the (R)-pantoate pocket. Gln59 serves as a coordination point for beta-alanine. 150-153 (GQKD) provides a ligand contact to ATP. Gln156 contacts (R)-pantoate. ATP contacts are provided by residues Val179 and 187–190 (CSSR). The segment at 281–542 (LLSPEQGDPL…ERSGPARLDQ (262 aa)) is cytidylate kinase. Positions 287-311 (GDPLPERVQHAAPPSSGTTSPPRRP) are disordered.

In the N-terminal section; belongs to the pantothenate synthetase family. It in the C-terminal section; belongs to the cytidylate kinase family. Type 1 subfamily.

The protein resides in the cytoplasm. The catalysed reaction is (R)-pantoate + beta-alanine + ATP = (R)-pantothenate + AMP + diphosphate + H(+). It carries out the reaction CMP + ATP = CDP + ADP. It catalyses the reaction dCMP + ATP = dCDP + ADP. Its pathway is cofactor biosynthesis; (R)-pantothenate biosynthesis; (R)-pantothenate from (R)-pantoate and beta-alanine: step 1/1. Its function is as follows. Catalyzes the condensation of pantoate with beta-alanine in an ATP-dependent reaction via a pantoyl-adenylate intermediate. Functionally, catalyzes the transfer of a phosphate group from ATP to either CMP or dCMP to form CDP or dCDP and ADP, respectively. The protein is Bifunctional pantoate ligase/cytidylate kinase of Synechococcus sp. (strain JA-2-3B'a(2-13)) (Cyanobacteria bacterium Yellowstone B-Prime).